The sequence spans 310 residues: Porphobilinogen deaminase (310 aa).

Cysteine 242 carries the S-(dipyrrolylmethanemethyl)cysteine modification.

This sequence belongs to the HMBS family. As to quaternary structure, monomer. It depends on dipyrromethane as a cofactor.

It catalyses the reaction 4 porphobilinogen + H2O = hydroxymethylbilane + 4 NH4(+). It participates in porphyrin-containing compound metabolism; protoporphyrin-IX biosynthesis; coproporphyrinogen-III from 5-aminolevulinate: step 2/4. Its function is as follows. Tetrapolymerization of the monopyrrole PBG into the hydroxymethylbilane pre-uroporphyrinogen in several discrete steps. This Shewanella oneidensis (strain ATCC 700550 / JCM 31522 / CIP 106686 / LMG 19005 / NCIMB 14063 / MR-1) protein is Porphobilinogen deaminase.